The following is a 217-amino-acid chain: Large ribosomal subunit protein uL16 (217 aa).

This sequence belongs to the universal ribosomal protein uL16 family. In terms of assembly, component of the small ribosomal subunit. Mature ribosomes consist of a small (40S) and a large (60S) subunit. The 40S subunit contains about 33 different proteins and 1 molecule of RNA (18S). The 60S subunit contains about 49 different proteins and 3 molecules of RNA (25S, 5.8S and 5S).

The chain is Large ribosomal subunit protein uL16 (rpl10) from Dictyostelium discoideum (Social amoeba).